A 1554-amino-acid polypeptide reads, in one-letter code: Lysine-specific demethylase 5C (1554 aa).

A JmjN domain is found at 14–55; it reads CPVFEPSWAEFRDPLGYIAKIRPIAEKSGICKIRPPADWQPP. Residues 79-169 form the ARID domain; that stretch reads TRVKLNYLDQ…IVYPYEMYQS (91 aa). Positions 197–207 are enriched in polar residues; sequence LRQSVQPSKFN. The interval 197-227 is disordered; sequence LRQSVQPSKFNSYGRRAKRLQPDPEPTEEDI. Residues lysine 205, lysine 229, lysine 244, and lysine 274 each participate in a glycyl lysine isopeptide (Lys-Gly) (interchain with G-Cter in SUMO2) cross-link. A disordered region spans residues 284–303; it reads ESTSPKTFLEGKEELSHSPE. Serine 287 is modified (phosphoserine). Lysine 295 is covalently cross-linked (Glycyl lysine isopeptide (Lys-Gly) (interchain with G-Cter in SUMO2)). A phosphoserine mark is found at serine 301 and serine 317. Residues 326-372 form a PHD-type 1 zinc finger; that stretch reads VCRMCSRGDEDDKLLLCDGCDDNYHIFCLLPPLPEIPKGVWRCPKCV. In terms of domain architecture, JmjC spans 468-634; the sequence is EYATSGWNLN…AGRQCIEHYR (167 aa). 3 residues coordinate Fe cation: histidine 514, aspartate 517, and histidine 602. Phosphoserine is present on residues serine 893 and serine 897. Lysine 1127 participates in a covalent cross-link: Glycyl lysine isopeptide (Lys-Gly) (interchain with G-Cter in SUMO2). The PHD-type 2 zinc finger occupies 1187–1248; the sequence is ICVCGQVPAG…DTKFLCPLCM (62 aa). 2 disordered regions span residues 1319-1364 and 1437-1535; these read SKPE…EGSG and AERH…APFS. Phosphoserine is present on serine 1353. The span at 1442-1457 shows a compositional bias: basic residues; sequence SRTRGRALERRRRRKV. Over residues 1458–1475 the composition is skewed to basic and acidic residues; the sequence is DRGGEPDDPAREELEPKR. The span at 1482–1497 shows a compositional bias: acidic residues; sequence EAEEVQEEEELEEETG.

This sequence belongs to the JARID1 histone demethylase family. Part of two distinct complexes, one containing E2F6, and the other containing REST. Interacts with ZMYND8. It depends on Fe(2+) as a cofactor.

Its subcellular location is the nucleus. It catalyses the reaction N(6),N(6),N(6)-trimethyl-L-lysyl(4)-[histone H3] + 3 2-oxoglutarate + 3 O2 = L-lysyl(4)-[histone H3] + 3 formaldehyde + 3 succinate + 3 CO2. Functionally, histone demethylase that specifically demethylates 'Lys-4' of histone H3, thereby playing a central role in histone code. Does not demethylate histone H3 'Lys-9', H3 'Lys-27', H3 'Lys-36', H3 'Lys-79' or H4 'Lys-20'. Demethylates trimethylated and dimethylated but not monomethylated H3 'Lys-4'. Participates in transcriptional repression of neuronal genes by recruiting histone deacetylases and REST at neuron-restrictive silencer elements. Represses the CLOCK-BMAL1 heterodimer-mediated transcriptional activation of the core clock component PER2. The polypeptide is Lysine-specific demethylase 5C (Kdm5c) (Mus musculus (Mouse)).